Reading from the N-terminus, the 326-residue chain is Tetraacyldisaccharide 4'-kinase (326 aa).

55–62 (TAGGNGKT) serves as a coordination point for ATP.

Belongs to the LpxK family.

The catalysed reaction is a lipid A disaccharide + ATP = a lipid IVA + ADP + H(+). Its pathway is glycolipid biosynthesis; lipid IV(A) biosynthesis; lipid IV(A) from (3R)-3-hydroxytetradecanoyl-[acyl-carrier-protein] and UDP-N-acetyl-alpha-D-glucosamine: step 6/6. Its function is as follows. Transfers the gamma-phosphate of ATP to the 4'-position of a tetraacyldisaccharide 1-phosphate intermediate (termed DS-1-P) to form tetraacyldisaccharide 1,4'-bis-phosphate (lipid IVA). In Serratia proteamaculans (strain 568), this protein is Tetraacyldisaccharide 4'-kinase.